The primary structure comprises 123 residues: Small ribosomal subunit protein uS11 (123 aa).

It belongs to the universal ribosomal protein uS11 family. As to quaternary structure, part of the 30S ribosomal subunit. Interacts with proteins S7 and S18. Binds to IF-3.

Located on the platform of the 30S subunit, it bridges several disparate RNA helices of the 16S rRNA. Forms part of the Shine-Dalgarno cleft in the 70S ribosome. This Coxiella burnetii (strain CbuG_Q212) (Coxiella burnetii (strain Q212)) protein is Small ribosomal subunit protein uS11.